Here is a 140-residue protein sequence, read N- to C-terminus: 3-hydroxyacyl-[acyl-carrier-protein] dehydratase FabZ (140 aa).

Histidine 47 is a catalytic residue.

The protein belongs to the thioester dehydratase family. FabZ subfamily.

It localises to the cytoplasm. The enzyme catalyses a (3R)-hydroxyacyl-[ACP] = a (2E)-enoyl-[ACP] + H2O. Functionally, involved in unsaturated fatty acids biosynthesis. Catalyzes the dehydration of short chain beta-hydroxyacyl-ACPs and long chain saturated and unsaturated beta-hydroxyacyl-ACPs. The polypeptide is 3-hydroxyacyl-[acyl-carrier-protein] dehydratase FabZ (Streptococcus suis (strain 98HAH33)).